We begin with the raw amino-acid sequence, 472 residues long: Adenosylhomocysteinase (472 aa).

Substrate-binding residues include Thr-64, Asp-138, and Glu-198. Residue 199 to 201 participates in NAD(+) binding; sequence TTT. 2 residues coordinate substrate: Lys-228 and Asp-232. NAD(+)-binding positions include Asn-233, 262–267, Glu-285, Asn-320, 341–343, and Asn-386; these read GFGDVG and IGH.

The protein belongs to the adenosylhomocysteinase family. Requires NAD(+) as cofactor.

The protein localises to the cytoplasm. It catalyses the reaction S-adenosyl-L-homocysteine + H2O = L-homocysteine + adenosine. Its pathway is amino-acid biosynthesis; L-homocysteine biosynthesis; L-homocysteine from S-adenosyl-L-homocysteine: step 1/1. May play a key role in the regulation of the intracellular concentration of adenosylhomocysteine. The chain is Adenosylhomocysteinase from Prochlorococcus marinus (strain MIT 9312).